We begin with the raw amino-acid sequence, 201 residues long: MSYVPIVIEQTSRGERAYDIYSRLLKERIIFVCSTVEDHMANLIVAQLLFLEAENPKKDVYMYINSPGGVVTAGLAIYDTMQYIKPKVATLCIGQACSMGSLLLCGGTQGMRYSLPHSRIMIHQPSGGYKGQATDIEIHAQETLKIKRLLNELYSKHTGQELKHIEKSMERDNFMSPEEAKKFGIIDNIISSRDVMTMSAK.

Residue Ser98 is the Nucleophile of the active site. His123 is an active-site residue.

This sequence belongs to the peptidase S14 family. In terms of assembly, fourteen ClpP subunits assemble into 2 heptameric rings which stack back to back to give a disk-like structure with a central cavity, resembling the structure of eukaryotic proteasomes.

Its subcellular location is the cytoplasm. It carries out the reaction Hydrolysis of proteins to small peptides in the presence of ATP and magnesium. alpha-casein is the usual test substrate. In the absence of ATP, only oligopeptides shorter than five residues are hydrolyzed (such as succinyl-Leu-Tyr-|-NHMec, and Leu-Tyr-Leu-|-Tyr-Trp, in which cleavage of the -Tyr-|-Leu- and -Tyr-|-Trp bonds also occurs).. Functionally, cleaves peptides in various proteins in a process that requires ATP hydrolysis. Has a chymotrypsin-like activity. Plays a major role in the degradation of misfolded proteins. This chain is ATP-dependent Clp protease proteolytic subunit, found in Rickettsia akari (strain Hartford).